A 67-amino-acid polypeptide reads, in one-letter code: Large ribosomal subunit protein bL35 (67 aa).

This sequence belongs to the bacterial ribosomal protein bL35 family.

This is Large ribosomal subunit protein bL35 from Rhizobium etli (strain CIAT 652).